The primary structure comprises 227 residues: Ribose-5-phosphate isomerase A (227 aa).

Substrate is bound by residues 28-31 (TGST), 85-88 (DGAD), and 98-101 (KGGG). The active-site Proton acceptor is the glutamate 107. Position 125 (lysine 125) interacts with substrate.

It belongs to the ribose 5-phosphate isomerase family. In terms of assembly, homodimer.

The catalysed reaction is aldehydo-D-ribose 5-phosphate = D-ribulose 5-phosphate. The protein operates within carbohydrate degradation; pentose phosphate pathway; D-ribose 5-phosphate from D-ribulose 5-phosphate (non-oxidative stage): step 1/1. Catalyzes the reversible conversion of ribose-5-phosphate to ribulose 5-phosphate. This chain is Ribose-5-phosphate isomerase A, found in Limosilactobacillus reuteri (strain DSM 20016) (Lactobacillus reuteri).